A 267-amino-acid chain; its full sequence is Extensin (267 aa).

Residues 1-267 (MCPAFSIFFN…HTPSPPPPYY (267 aa)) are disordered. 13 consecutive repeats follow at residues 18-33 (PPTYTPSPKPPTPKPT), 34-54 (PPTYTPSPKPPASKPPTPKPT), 55-70 (PPTYTPSPKPPTPKPT), 71-91 (PPTYTPSPKPPATKPPTPKPT), 92-107 (PPTYTPSPKPPTPKPT), 108-128 (PPTYTPSPKPPATKPPTPKPT), 129-144 (PPTYTPSPKPPTPKPT), 145-160 (PPTYTPSPKPPTPKPT), 161-179 (PPTYTPSPKPPTHPTPKPT), 180-195 (PPTYTPSPKPPTPKPT), 196-211 (PPTYTPSPKPPTPKPT), 212-232 (PPTYTPSPKPPATKPPTPKPT), and 233-253 (PPTYTPTPKPPATKPPTYTPT). The interval 18 to 253 (PPTYTPSPKP…ATKPPTYTPT (236 aa)) is highly repetitive. A compositionally biased stretch (pro residues) spans 20–267 (TYTPSPKPPT…HTPSPPPPYY (248 aa)). The interval 261 to 265 (SPPPP) is extensin repetitive element.

Hydroxylated on proline residues in the S-P-P-P-P repeat. In terms of processing, O-glycosylated on hydroxyprolines. As to expression, mainly in the coleoptile node and root tip.

The protein resides in the secreted. It is found in the primary cell wall. Structural component in primary cell wall. In Zea mays (Maize), this protein is Extensin (HRGP).